Here is a 288-residue protein sequence, read N- to C-terminus: DNA repair protein RecO (288 aa).

The protein belongs to the RecO family.

Its function is as follows. Involved in DNA repair and RecF pathway recombination. The chain is DNA repair protein RecO from Trichodesmium erythraeum (strain IMS101).